The sequence spans 283 residues: Small ribosomal subunit protein uS2B (283 aa).

Residues 254 to 283 (GQVGQSAWDEEGDWNTTGAAQTSDWANTVA) form a disordered region. The segment covering 267 to 283 (WNTTGAAQTSDWANTVA) has biased composition (polar residues).

It belongs to the universal ribosomal protein uS2 family. Component of the small ribosomal subunit. Mature ribosomes consist of a small (40S) and a large (60S) subunit. The 40S subunit contains about 33 different proteins and 1 molecule of RNA (18S). The 60S subunit contains about 49 different proteins and 3 molecules of RNA (25S, 5.8S and 5S). Interacts with rps21.

The protein localises to the cytoplasm. Its function is as follows. Required for the assembly and/or stability of the 40S ribosomal subunit. Required for the processing of the 20S rRNA-precursor to mature 18S rRNA in a late step of the maturation of 40S ribosomal subunits. The protein is Small ribosomal subunit protein uS2B (rps0b) of Schizosaccharomyces japonicus (strain yFS275 / FY16936) (Fission yeast).